The sequence spans 44 residues: Defensin-like peptide (44 aa).

Disulfide bonds link C7/C32, C18/C40, and C22/C42.

In terms of tissue distribution, hemolymph.

The protein localises to the secreted. Functionally, has antibacterial activity against the Gram-positive bacterium S.lutea (MIC=1.9 uM). Lacks antibacterial activity against the Gram-positive bacteria L.monocytogenes and M.luteus, and the Gram-negative bacteria E.coli D31, E.coli ATCC 25922, and S.typhimurium. Has antifungal activity against A.niger (MIC=2.9 uM), C.albicans (MIC=2.9 uM), C.fructus (MIC=2.9 uM), C.wickerhamii (MIC=2.9 uM), P.pastoris (MIC=2.9 uM), P.stiptis (MIC=2.9 uM), P.tannophilus (MIC=2.9 uM), T.harzianum (MIC=2.9 uM), and Z.marxianus (MIC=2.9 uM), but lacks antifungal activity against C.albidus, F.oxysporum, and S.cerevisiae. This Galleria mellonella (Greater wax moth) protein is Defensin-like peptide.